The chain runs to 386 residues: Succinate--CoA ligase [ADP-forming] subunit beta (386 aa).

An ATP-grasp domain is found at 9–244 (KEILRSFGVP…LDEEDPAEVE (236 aa)). Residues Lys-46, 53–55 (GRG), Glu-99, Ala-102, and Glu-107 contribute to the ATP site. Mg(2+) contacts are provided by Asn-199 and Asp-213. Substrate contacts are provided by residues Asn-264 and 321-323 (GIM).

It belongs to the succinate/malate CoA ligase beta subunit family. Heterotetramer of two alpha and two beta subunits. Requires Mg(2+) as cofactor.

It carries out the reaction succinate + ATP + CoA = succinyl-CoA + ADP + phosphate. The enzyme catalyses GTP + succinate + CoA = succinyl-CoA + GDP + phosphate. It participates in carbohydrate metabolism; tricarboxylic acid cycle; succinate from succinyl-CoA (ligase route): step 1/1. Its function is as follows. Succinyl-CoA synthetase functions in the citric acid cycle (TCA), coupling the hydrolysis of succinyl-CoA to the synthesis of either ATP or GTP and thus represents the only step of substrate-level phosphorylation in the TCA. The beta subunit provides nucleotide specificity of the enzyme and binds the substrate succinate, while the binding sites for coenzyme A and phosphate are found in the alpha subunit. This is Succinate--CoA ligase [ADP-forming] subunit beta from Acidovorax ebreus (strain TPSY) (Diaphorobacter sp. (strain TPSY)).